A 366-amino-acid chain; its full sequence is Protein-glutamate methylesterase/protein-glutamine glutaminase 2 (366 aa).

The region spanning arginine 3–leucine 119 is the Response regulatory domain. At aspartate 53 the chain carries 4-aspartylphosphate. Positions alanine 149–lysine 168 are disordered. Positions lysine 156–arginine 166 are enriched in basic residues. The 193-residue stretch at proline 171 to aspartate 363 folds into the CheB-type methylesterase domain. Catalysis depends on residues serine 181, histidine 208, and aspartate 305.

It belongs to the CheB family. Phosphorylated by CheA. Phosphorylation of the N-terminal regulatory domain activates the methylesterase activity.

The protein localises to the cytoplasm. It carries out the reaction [protein]-L-glutamate 5-O-methyl ester + H2O = L-glutamyl-[protein] + methanol + H(+). The catalysed reaction is L-glutaminyl-[protein] + H2O = L-glutamyl-[protein] + NH4(+). In terms of biological role, involved in chemotaxis. Part of a chemotaxis signal transduction system that modulates chemotaxis in response to various stimuli. Catalyzes the demethylation of specific methylglutamate residues introduced into the chemoreceptors (methyl-accepting chemotaxis proteins or MCP) by CheR. Also mediates the irreversible deamidation of specific glutamine residues to glutamic acid. The protein is Protein-glutamate methylesterase/protein-glutamine glutaminase 2 of Rhodopseudomonas palustris (strain BisB18).